Consider the following 308-residue polypeptide: Apolipoprotein E (308 aa).

A signal peptide spans 1–18; that stretch reads MKFLWAALVVTLLAGCRA. 8 consecutive repeat copies span residues 75–96, 97–118, 119–140, 141–162, 163–184, 185–206, 207–224, and 225–246. The 8 X 22 AA approximate tandem repeats stretch occupies residues 75–246; the sequence is LLIEETMKEV…RLDDMRDQME (172 aa). Positions 153–163 are LDL and other lipoprotein receptors binding; it reads HLRKLRKRLLR. 157-160 lines the heparin pocket; sequence LRKR. The lipid-binding and lipoprotein association stretch occupies residues 205-281; it reads AIPPSQQLRE…SWFEPLVQDM (77 aa). 220 to 227 provides a ligand contact to heparin; sequence GQKVRGRL. A homooligomerization region spans residues 257–308; that stretch reads SQVRLQAEAFQTRLKSWFEPLVQDMQRQWASLVEKVQSTLGISPSTKPSKTK. The tract at residues 269 to 281 is specificity for association with VLDL; the sequence is RLKSWFEPLVQDM.

Belongs to the apolipoprotein A1/A4/E family. As to quaternary structure, homotetramer. May interact with ABCA1; functionally associated with ABCA1 in the biogenesis of HDLs. May interact with APP/A4 amyloid-beta peptide; the interaction is extremely stable in vitro but its physiological significance is unclear. May interact with MAPT. May interact with MAP2. In the cerebrospinal fluid, interacts with secreted SORL1. Interacts with PMEL; this allows the loading of PMEL luminal fragment on ILVs to induce fibril nucleation. In terms of processing, APOE exists as multiple glycosylated and sialylated glycoforms within cells and in plasma. The extent of glycosylation and sialylation are tissue and context specific. Post-translationally, glycated in plasma VLDL. Phosphorylated by FAM20C in the extracellular medium.

The protein resides in the secreted. Its subcellular location is the extracellular space. It is found in the extracellular matrix. It localises to the extracellular vesicle. The protein localises to the endosome. The protein resides in the multivesicular body. Its function is as follows. APOE is an apolipoprotein, a protein associating with lipid particles, that mainly functions in lipoprotein-mediated lipid transport between organs via the plasma and interstitial fluids. APOE is a core component of plasma lipoproteins and is involved in their production, conversion and clearance. Apolipoproteins are amphipathic molecules that interact both with lipids of the lipoprotein particle core and the aqueous environment of the plasma. As such, APOE associates with chylomicrons, chylomicron remnants, very low density lipoproteins (VLDL) and intermediate density lipoproteins (IDL) but shows a preferential binding to high-density lipoproteins (HDL). It also binds a wide range of cellular receptors including the LDL receptor/LDLR and the very low-density lipoprotein receptor/VLDLR that mediate the cellular uptake of the APOE-containing lipoprotein particles. Finally, APOE also has a heparin-binding activity and binds heparan-sulfate proteoglycans on the surface of cells, a property that supports the capture and the receptor-mediated uptake of APOE-containing lipoproteins by cells. This is Apolipoprotein E (APOE) from Pteropus pselaphon (Bonin flying fox).